A 242-amino-acid chain; its full sequence is Probable transcriptional regulatory protein Cphy_2507 (242 aa).

This sequence belongs to the TACO1 family.

It is found in the cytoplasm. The protein is Probable transcriptional regulatory protein Cphy_2507 of Lachnoclostridium phytofermentans (strain ATCC 700394 / DSM 18823 / ISDg) (Clostridium phytofermentans).